Here is a 266-residue protein sequence, read N- to C-terminus: Apolipoprotein A-I (266 aa).

The N-terminal stretch at 1–18 (MKAVVLTLAVLFLTGSQA) is a signal peptide. Tandem repeats lie at residues 67-88 (LKLL…EQLG) and 89-110 (PVTQ…QEMN). The tract at residues 67-266 (LKLLDNWDSL…EEASKKLNAQ (200 aa)) is 10 X approximate tandem repeats. Position 109 is a methionine sulfoxide (Met109). Residues 111-121 (KDVEEMKTKVQ) form a 3; half-length repeat. Tandem repeats lie at residues 122 to 143 (PYLD…QKVE), 144 to 165 (PLGS…EKLS), 166 to 187 (PLGE…TQLA), 188 to 209 (PYSE…ESGG), and 210 to 231 (ASLA…EKAK). One copy of the 9; half-length repeat lies at 232–242 (PALEDLRQGLL). Residues 243–266 (PVLESFKVSLLSALEEASKKLNAQ) form repeat 10.

This sequence belongs to the apolipoprotein A1/A4/E family. Homodimer. Interacts with APOA1BP and CLU. Component of a sperm activating protein complex (SPAP), consisting of APOA1, an immunoglobulin heavy chain, an immunoglobulin light chain and albumin. Interacts with NDRG1. Interacts with SCGB3A2. Interacts with NAXE and YJEFN3. Glycosylated. In terms of processing, palmitoylated. Post-translationally, phosphorylation sites are present in the extracellular medium. Major protein of plasma HDL, also found in chylomicrons.

The protein localises to the secreted. In terms of biological role, participates in the reverse transport of cholesterol from tissues to the liver for excretion by promoting cholesterol efflux from tissues and by acting as a cofactor for the lecithin cholesterol acyltransferase (LCAT). As part of the SPAP complex, activates spermatozoa motility. The sequence is that of Apolipoprotein A-I (APOA1) from Carlito syrichta (Philippine tarsier).